A 323-amino-acid polypeptide reads, in one-letter code: SURF1-like protein (323 aa).

The span at 57–71 (DAPKSRENREKDGGK) shows a compositional bias: basic and acidic residues. The segment at 57–76 (DAPKSRENREKDGGKSKKSK) is disordered. 2 helical membrane-spanning segments follow: residues 81–101 (WSTGSVLMLTIPVFAFSLGIW) and 299–319 (HLNYLTTWFTLTLVTMLMWIH).

It belongs to the SURF1 family.

The protein resides in the mitochondrion inner membrane. Functionally, probably involved in the biogenesis of the COX complex. The polypeptide is SURF1-like protein (sft-1) (Caenorhabditis elegans).